The chain runs to 241 residues: MDIALMKNMIKAGVHFGHQTRYWNPKMKPFIFGIKNKVHIINLEKTLPLFRLAINELKKTIKFNGKILFVGTKRSASAAIKSIALSCNQFYVNHRWLGGMLTNWKTVRQSINKLKDLEKQSLDGTFDKLTKKEVLLRIRLLNKLENSLGGIKNMGGLPDAIFIIDTAYEHIAIREANHLGIPVFAIVDTNSSPDGVNYIIPGNDDAIRSINLYLNILSDELSKCYKEKKESIILKNRLKEQ.

Belongs to the universal ribosomal protein uS2 family.

This is Small ribosomal subunit protein uS2 from Buchnera aphidicola subsp. Cinara cedri (strain Cc).